Reading from the N-terminus, the 155-residue chain is Molybdopterin synthase catalytic subunit 2 (155 aa).

Residues 101-102, K117, and 124-126 contribute to the substrate site; these read HR and KKE.

The protein belongs to the MoaE family. MOCS2B subfamily. As to quaternary structure, heterotetramer; composed of 2 small (MOCS2A) and 2 large (MOCS2B) subunits.

It localises to the cytoplasm. It carries out the reaction 2 [molybdopterin-synthase sulfur-carrier protein]-C-terminal-Gly-aminoethanethioate + cyclic pyranopterin phosphate + H2O = molybdopterin + 2 [molybdopterin-synthase sulfur-carrier protein]-C-terminal Gly-Gly + 2 H(+). It functions in the pathway cofactor biosynthesis; molybdopterin biosynthesis. Catalytic subunit of the molybdopterin synthase complex, a complex that catalyzes the conversion of precursor Z into molybdopterin. Acts by mediating the incorporation of 2 sulfur atoms from thiocarboxylated MOCS2A into precursor Z to generate a dithiolene group. The chain is Molybdopterin synthase catalytic subunit 2 from Aedes aegypti (Yellowfever mosquito).